The primary structure comprises 264 residues: 14-3-3-like protein GF14-A (264 aa).

Residues 245–264 (DMQDDGGDEMRDATKPEDEH) are disordered. The span at 252–264 (DEMRDATKPEDEH) shows a compositional bias: basic and acidic residues.

It belongs to the 14-3-3 family.

Its function is as follows. Is associated with a DNA binding complex that binds to the G box, a well-characterized cis-acting DNA regulatory element found in plant genes. The sequence is that of 14-3-3-like protein GF14-A (GF14A) from Oryza sativa subsp. japonica (Rice).